Consider the following 302-residue polypeptide: Nitric oxide synthase-interacting protein (302 aa).

At S36 the chain carries Phosphoserine. Residues 55-75 (DPVVTPDGYLYEREAILEYIL) are U-box-like. A Nuclear localization signal motif is present at residues 78-101 (KKEIARQMKAYEKQRGARREEQKE). The tract at residues 126 to 156 (LNPFTPKAASAGNGPDDAQPGSSAGPAGKDK) is disordered.

The protein belongs to the NOSIP family. Interacts with NOS1 and NOS3. Interacts with PP2A holoenzyme, containing PPP2CA, PPP2CB, PPP2R1A and PPP2R2A subunits.

The protein localises to the cytoplasm. It is found in the nucleus. The enzyme catalyses S-ubiquitinyl-[E2 ubiquitin-conjugating enzyme]-L-cysteine + [acceptor protein]-L-lysine = [E2 ubiquitin-conjugating enzyme]-L-cysteine + N(6)-ubiquitinyl-[acceptor protein]-L-lysine.. Its function is as follows. E3 ubiquitin-protein ligase that is essential for proper development of the forebrain, the eye, and the face. Catalyzes monoubiquitination of serine/threonine-protein phosphatase 2A (PP2A) catalytic subunit PPP2CA/PPP2CB. Negatively regulates nitric oxide production by inducing NOS1 and NOS3 translocation to actin cytoskeleton and inhibiting their enzymatic activity. In Bos taurus (Bovine), this protein is Nitric oxide synthase-interacting protein (NOSIP).